We begin with the raw amino-acid sequence, 477 residues long: C4-dicarboxylate transport protein 1 (477 aa).

Helical transmembrane passes span 21 to 39 (PYVQVLVAILLGVAVGHFY), 59 to 76 (MIIAPVIFLTVSTGIAGM), 89 to 111 (AMVYFVTFSTLALIVGLIVGNVI), 162 to 179 (ILQVLFFSVLFGIALAMV), 200 to 221 (LVGILMKAAPIGAFGAMAFTIG), 231 to 253 (LAMLVGTFYLTAFLFVFGVLGAV), 342 to 364 (VLLLLVAMLSSKGAAGVTGAGFV), and 368 to 387 (ATLSVVPAVPVAGMALILGV). Positions 435–477 (SAGQPLITPAPSNSAASLPVESPGWSQTPDDRAAGSKQTLAGR) are disordered.

Belongs to the dicarboxylate/amino acid:cation symporter (DAACS) (TC 2.A.23) family.

Its subcellular location is the cell inner membrane. Responsible for the transport of dicarboxylates such as succinate, fumarate, and malate from the periplasm across the membrane. This transport system plays an important role in the energy supply of rhizobium-legume symbionts. The protein is C4-dicarboxylate transport protein 1 (dctA1) of Mesorhizobium japonicum (strain LMG 29417 / CECT 9101 / MAFF 303099) (Mesorhizobium loti (strain MAFF 303099)).